We begin with the raw amino-acid sequence, 603 residues long: Granule-bound starch synthase 1, chloroplastic/amyloplastic (603 aa).

The N-terminal 75 residues, Met-1 to Cys-75, are a transit peptide targeting the chloroplast. Lys-91 is a binding site for ADP-alpha-D-glucose.

The protein belongs to the glycosyltransferase 1 family. Bacterial/plant glycogen synthase subfamily. As to expression, expressed in pods and leaves. No expression in flowers or stipules.

It localises to the plastid. It is found in the chloroplast. The protein resides in the amyloplast. The enzyme catalyses an NDP-alpha-D-glucose + [(1-&gt;4)-alpha-D-glucosyl](n) = [(1-&gt;4)-alpha-D-glucosyl](n+1) + a ribonucleoside 5'-diphosphate + H(+). It participates in glycan biosynthesis; starch biosynthesis. Functionally, may be responsible for the synthesis of amylose. This is Granule-bound starch synthase 1, chloroplastic/amyloplastic from Pisum sativum (Garden pea).